A 194-amino-acid chain; its full sequence is Fe/S biogenesis protein NfuA (194 aa).

[4Fe-4S] cluster contacts are provided by cysteine 152 and cysteine 155.

The protein belongs to the NfuA family. In terms of assembly, homodimer. The cofactor is [4Fe-4S] cluster.

Its function is as follows. Involved in iron-sulfur cluster biogenesis. Binds a 4Fe-4S cluster, can transfer this cluster to apoproteins, and thereby intervenes in the maturation of Fe/S proteins. Could also act as a scaffold/chaperone for damaged Fe/S proteins. The protein is Fe/S biogenesis protein NfuA of Pseudomonas putida (strain ATCC 700007 / DSM 6899 / JCM 31910 / BCRC 17059 / LMG 24140 / F1).